The following is a 132-amino-acid chain: Thioredoxin H4-2 (132 aa).

The region spanning 18–130 (DFKGGNVHVI…LEKKVQALAD (113 aa)) is the Thioredoxin domain. Catalysis depends on nucleophile residues cysteine 56 and cysteine 59. A disulfide bridge connects residues cysteine 56 and cysteine 59.

The protein belongs to the thioredoxin family. Plant H-type subfamily.

Its subcellular location is the cytoplasm. Its function is as follows. Probable thiol-disulfide oxidoreductase that may be involved in the redox regulation of a number of cytosolic enzymes. The protein is Thioredoxin H4-2 of Oryza sativa subsp. japonica (Rice).